The following is a 361-amino-acid chain: DNA replication and repair protein RecF (361 aa).

30 to 37 provides a ligand contact to ATP; the sequence is GPNGSGKT.

This sequence belongs to the RecF family.

It is found in the cytoplasm. Functionally, the RecF protein is involved in DNA metabolism; it is required for DNA replication and normal SOS inducibility. RecF binds preferentially to single-stranded, linear DNA. It also seems to bind ATP. The protein is DNA replication and repair protein RecF of Yersinia pseudotuberculosis serotype IB (strain PB1/+).